The primary structure comprises 541 residues: Protopine 6-monooxygenase (541 aa).

Residues 9–29 (LLLNTWISAYSMAALLALVLV) form a helical membrane-spanning segment. Cys-476 is a heme binding site.

The protein belongs to the cytochrome P450 family. It depends on heme as a cofactor.

It is found in the endoplasmic reticulum membrane. The enzyme catalyses protopine + reduced [NADPH--hemoprotein reductase] + O2 = 6-hydroxyprotopine + oxidized [NADPH--hemoprotein reductase] + H2O + H(+). It functions in the pathway alkaloid biosynthesis. Its function is as follows. Catalyzes the conversion of protopine and allocryptopine to dihydrosanguinarine and dihydrochelerythrine, respectively, in the biosynthesis of isoquinoline alkaloid sanguinarine. The chain is Protopine 6-monooxygenase (CYP82N3) from Papaver somniferum (Opium poppy).